The primary structure comprises 402 residues: Imidazolonepropionase (402 aa).

Positions 69 and 71 each coordinate Fe(3+). Zn(2+)-binding residues include H69 and H71. The 4-imidazolone-5-propanoate site is built by R78, Y141, and H174. An N-formimidoyl-L-glutamate-binding site is contributed by Y141. H239 is a binding site for Fe(3+). H239 serves as a coordination point for Zn(2+). Q242 provides a ligand contact to 4-imidazolone-5-propanoate. D314 serves as a coordination point for Fe(3+). Position 314 (D314) interacts with Zn(2+). Residues N316 and G318 each coordinate N-formimidoyl-L-glutamate. Residue T319 coordinates 4-imidazolone-5-propanoate.

This sequence belongs to the metallo-dependent hydrolases superfamily. HutI family. Requires Zn(2+) as cofactor. It depends on Fe(3+) as a cofactor.

Its subcellular location is the cytoplasm. It carries out the reaction 4-imidazolone-5-propanoate + H2O = N-formimidoyl-L-glutamate. It functions in the pathway amino-acid degradation; L-histidine degradation into L-glutamate; N-formimidoyl-L-glutamate from L-histidine: step 3/3. Functionally, catalyzes the hydrolytic cleavage of the carbon-nitrogen bond in imidazolone-5-propanoate to yield N-formimidoyl-L-glutamate. It is the third step in the universal histidine degradation pathway. In Maricaulis maris (strain MCS10) (Caulobacter maris), this protein is Imidazolonepropionase.